A 410-amino-acid chain; its full sequence is Phosphopentomutase (410 aa).

6 residues coordinate Mn(2+): aspartate 10, aspartate 309, histidine 314, aspartate 350, histidine 351, and histidine 362.

It belongs to the phosphopentomutase family. Requires Mn(2+) as cofactor.

It localises to the cytoplasm. It catalyses the reaction 2-deoxy-alpha-D-ribose 1-phosphate = 2-deoxy-D-ribose 5-phosphate. It carries out the reaction alpha-D-ribose 1-phosphate = D-ribose 5-phosphate. The protein operates within carbohydrate degradation; 2-deoxy-D-ribose 1-phosphate degradation; D-glyceraldehyde 3-phosphate and acetaldehyde from 2-deoxy-alpha-D-ribose 1-phosphate: step 1/2. Isomerase that catalyzes the conversion of deoxy-ribose 1-phosphate (dRib-1-P) and ribose 1-phosphate (Rib-1-P) to deoxy-ribose 5-phosphate (dRib-5-P) and ribose 5-phosphate (Rib-5-P), respectively. This is Phosphopentomutase from Aliivibrio fischeri (strain ATCC 700601 / ES114) (Vibrio fischeri).